The sequence spans 496 residues: Cobyric acid synthase (496 aa).

The 195-residue stretch at 264–458 folds into the GATase cobBQ-type domain; sequence HTRIAVVAYP…LHGLFEDAAV (195 aa). Catalysis depends on C345, which acts as the Nucleophile. Residue H450 is part of the active site.

The protein belongs to the CobB/CobQ family. CobQ subfamily.

It participates in cofactor biosynthesis; adenosylcobalamin biosynthesis. Catalyzes amidations at positions B, D, E, and G on adenosylcobyrinic A,C-diamide. NH(2) groups are provided by glutamine, and one molecule of ATP is hydrogenolyzed for each amidation. The chain is Cobyric acid synthase from Acidovorax ebreus (strain TPSY) (Diaphorobacter sp. (strain TPSY)).